A 400-amino-acid polypeptide reads, in one-letter code: MSFVKDFKPQALGDTNLFKPIKIGNNELLHRAVIPPLTRMRALHPGNIPNRDWAVEYYTQRAQRPGTMIITEGAFISPQAGGYDNAPGVWSEEQMVEWTKIFNAIHEKKSFVWVQLWVLGWAAFPDNLARDGLRYDSASDNVFMDAEQEAKAKKANNPQHSLTKDEIKQYIKEYVQAAKNSIAAGADGVEIHSANGYLLNQFLDPHSNTRTDEYGGSIENRARFTLEVVDALVEAIGHEKVGLRLSPYGVFNSMSGGAETGIVAQYAYVAGELEKRAKAGKRLAFVHLVEPRVTNPFLTEGEGEYEGGSNDFVYSIWKGPVIRAGNFALHPEVVREEVKDKRTLIGYGRFFISNPDLVDRLEKGLPLNKYDRDTFYQMSAHGYIDYPTYEEALKLGWDKK.

The FMN site is built by T38 and Q115. Substrate contacts are provided by H192 and N195. Y197 functions as the Proton donor in the catalytic mechanism. Positions 244 and 349 each coordinate FMN. Y376 contributes to the substrate binding site.

In terms of assembly, homodimer or heterodimer. Requires FMN as cofactor.

The enzyme catalyses A + NADPH + H(+) = AH2 + NADP(+). Flavin-dependent enoate reductase that catalyzes the chemo- and stereoslective hydrogenation of electron-poor alkenes. The enzyme is reduced by NADPH, and oxygen, quinones, and alpha,beta-unsaturated aldehydes and ketones can act as electron acceptors to complete catalytic turnover. The physiological oxidant remains elusive. This Saccharomyces pastorianus (Lager yeast) protein is NADPH dehydrogenase 1.